Here is a 142-residue protein sequence, read N- to C-terminus: Nucleoside diphosphate kinase (142 aa).

Lysine 11, phenylalanine 59, arginine 87, threonine 93, arginine 104, and asparagine 114 together coordinate ATP. Histidine 117 serves as the catalytic Pros-phosphohistidine intermediate.

The protein belongs to the NDK family. Homotetramer. Mg(2+) serves as cofactor.

Its subcellular location is the cytoplasm. The catalysed reaction is a 2'-deoxyribonucleoside 5'-diphosphate + ATP = a 2'-deoxyribonucleoside 5'-triphosphate + ADP. The enzyme catalyses a ribonucleoside 5'-diphosphate + ATP = a ribonucleoside 5'-triphosphate + ADP. Functionally, major role in the synthesis of nucleoside triphosphates other than ATP. The ATP gamma phosphate is transferred to the NDP beta phosphate via a ping-pong mechanism, using a phosphorylated active-site intermediate. The polypeptide is Nucleoside diphosphate kinase (Salinibacter ruber (strain DSM 13855 / M31)).